We begin with the raw amino-acid sequence, 329 residues long: ADP-L-glycero-D-manno-heptose-6-epimerase (329 aa).

Residues 10-11 (FI), 31-32 (DD), Lys38, Lys53, 74-78 (QGACS), and Asn91 contribute to the NADP(+) site. Residue Tyr138 is the Proton acceptor of the active site. Lys142 serves as a coordination point for NADP(+). Asn167 lines the substrate pocket. Residues Val168 and Lys176 each coordinate NADP(+). Lys176 serves as the catalytic Proton acceptor. Residues Arg178, His185, 199 to 202 (FAGW), Arg212, and Tyr291 each bind substrate.

It belongs to the NAD(P)-dependent epimerase/dehydratase family. HldD subfamily. Homopentamer. NADP(+) is required as a cofactor.

It carries out the reaction ADP-D-glycero-beta-D-manno-heptose = ADP-L-glycero-beta-D-manno-heptose. It functions in the pathway nucleotide-sugar biosynthesis; ADP-L-glycero-beta-D-manno-heptose biosynthesis; ADP-L-glycero-beta-D-manno-heptose from D-glycero-beta-D-manno-heptose 7-phosphate: step 4/4. It participates in bacterial outer membrane biogenesis; LPS core biosynthesis. Catalyzes the interconversion between ADP-D-glycero-beta-D-manno-heptose and ADP-L-glycero-beta-D-manno-heptose via an epimerization at carbon 6 of the heptose. This is ADP-L-glycero-D-manno-heptose-6-epimerase from Bordetella parapertussis (strain 12822 / ATCC BAA-587 / NCTC 13253).